The following is a 275-amino-acid chain: Transcription factor JUNGBRUNNEN 1 (275 aa).

Residues M1 to F24 are disordered. One can recognise an NAC domain in the interval P18–R167. The DNA-binding element occupies V115 to N173. Residues C191–P219 are disordered. Positions D198–S211 are enriched in basic and acidic residues.

As to expression, expressed in roots, root caps, cotyledons, tips and margin of young leaves, senescent regions of fully expanded leaves and floral tissues, including old sepals, petals, staments, mature anthers and pollen grains. Not detected in the abscission zone of open flowers, emerging lateral roots and root meristematic zones.

The protein localises to the nucleus. Functionally, transcription factor that binds to the 5'- RRYGCCGT-3' consensus core sequence. Central longevity regulator. Negative regulator of leaf senescence. Modulates cellular H(2)O(2) levels and enhances tolerance to various abiotic stresses through the regulation of DREB2A. The polypeptide is Transcription factor JUNGBRUNNEN 1 (JUB1) (Arabidopsis thaliana (Mouse-ear cress)).